The following is a 135-amino-acid chain: MEEYENLLNRAIDQLPPEVFEHKRFKIPKAYSDIQGNRTFIKNFKDVAEDLNRDPQHVLKFLLRELGTAGNLEGSRAILQGKFTHYLINERLEDYVEKYVICHECNRPDTKIIREDRIFILKCAACGAKAPLKPL.

It belongs to the eIF-2-beta/eIF-5 family. As to quaternary structure, heterotrimer composed of an alpha, a beta and a gamma chain.

Functionally, eIF-2 functions in the early steps of protein synthesis by forming a ternary complex with GTP and initiator tRNA. This Methanobrevibacter smithii (strain ATCC 35061 / DSM 861 / OCM 144 / PS) protein is Translation initiation factor 2 subunit beta.